The primary structure comprises 365 residues: Flagellar P-ring protein (365 aa).

The first 19 residues, Met1–Ala19, serve as a signal peptide directing secretion.

It belongs to the FlgI family. The basal body constitutes a major portion of the flagellar organelle and consists of four rings (L,P,S, and M) mounted on a central rod.

Its subcellular location is the periplasm. The protein localises to the bacterial flagellum basal body. Functionally, assembles around the rod to form the L-ring and probably protects the motor/basal body from shearing forces during rotation. The protein is Flagellar P-ring protein of Sodalis glossinidius (strain morsitans).